The sequence spans 592 residues: Aspartate--tRNA ligase (592 aa).

Glu177 lines the L-aspartate pocket. The interval 201–204 (QIFK) is aspartate. Residue Arg223 participates in L-aspartate binding. ATP-binding positions include 223–225 (RDE) and Gln232. L-aspartate is bound at residue His451. Glu485 contacts ATP. Arg492 provides a ligand contact to L-aspartate. 537 to 540 (GLDR) lines the ATP pocket.

This sequence belongs to the class-II aminoacyl-tRNA synthetase family. Type 1 subfamily. Homodimer.

It localises to the cytoplasm. It catalyses the reaction tRNA(Asp) + L-aspartate + ATP = L-aspartyl-tRNA(Asp) + AMP + diphosphate. Its function is as follows. Catalyzes the attachment of L-aspartate to tRNA(Asp) in a two-step reaction: L-aspartate is first activated by ATP to form Asp-AMP and then transferred to the acceptor end of tRNA(Asp). The chain is Aspartate--tRNA ligase from Bacillus licheniformis (strain ATCC 14580 / DSM 13 / JCM 2505 / CCUG 7422 / NBRC 12200 / NCIMB 9375 / NCTC 10341 / NRRL NRS-1264 / Gibson 46).